We begin with the raw amino-acid sequence, 409 residues long: MLTNGLISLLAIAGLATNAFAGPIRKVSNAGAAGAIADKYIVVLKKGLSDSAVSKHTNRISSFHSNVARDLTGARAHGVGRKFRFSSTGFNGYVGGFDKATLQEILNSPEVDYVEQDTVVTTYAEQTDSTWGLDRISHEDYSAPYTYEYDETAAGAGTTVYVIDTGIRISHDEFQTVNGSSRATWGFNSVDKTDSDGNGHGTHCAGTIAGKTYGVSKKAKVVAVKVLSAGGSGSTAGVVSGMNWVAENATPNFSVASMSLGGSKSAALNTAVDAIFNAGITIVVAAGNENQDAKNVSPASAPNAITVGAIDSSNKIASFSNWGTLIDVFAPGVGVLSSWATSDKETKTISGTSMACPHVAGLAAYYISASEGGADPATITDKITSSAVSGQVTGNIRGSPNKIAYNGYA.

An N-terminal signal peptide occupies residues 1-21 (MLTNGLISLLAIAGLATNAFA). Positions 22-123 (GPIRKVSNAG…VEQDTVVTTY (102 aa)) are excised as a propeptide. The Inhibitor I9 domain maps to 39 to 122 (KYIVVLKKGL…YVEQDTVVTT (84 aa)). A Peptidase S8 domain is found at 130–409 (TWGLDRISHE…PNKIAYNGYA (280 aa)). Asp-164 (charge relay system) is an active-site residue. Asn-178 is a glycosylation site (N-linked (GlcNAc...) asparagine). His-200 serves as the catalytic Charge relay system. Asn-252 carries an N-linked (GlcNAc...) asparagine glycan. The active-site Charge relay system is Ser-353.

The protein belongs to the peptidase S8 family.

The protein localises to the secreted. With respect to regulation, inhibited by PMSF, SSI, the peptide Phe-Val and by Phe, but not by EDTA. Hydrolyzes gelatin, casein, the chromogenic substrate azocoll and the cuticle of the nematode P.redivivus. Immobilizes P.redivivus. This chain is Cuticle-degrading serine protease, found in Arthrobotrys oligospora (strain ATCC 24927 / CBS 115.81 / DSM 1491) (Nematode-trapping fungus).